The following is a 131-amino-acid chain: Small ribosomal subunit protein uS8 (131 aa).

This sequence belongs to the universal ribosomal protein uS8 family. As to quaternary structure, part of the 30S ribosomal subunit. Contacts proteins S5 and S12.

In terms of biological role, one of the primary rRNA binding proteins, it binds directly to 16S rRNA central domain where it helps coordinate assembly of the platform of the 30S subunit. The sequence is that of Small ribosomal subunit protein uS8 from Bordetella parapertussis (strain 12822 / ATCC BAA-587 / NCTC 13253).